The chain runs to 77 residues: U3-theraphotoxin-Hhn1k (77 aa).

The N-terminal stretch at 1-14 (TFAGLVLLFVVCYA) is a signal peptide. A propeptide spanning residues 15–42 (SESEEKEFPKEMLSSIFAVDNDFKQEER) is cleaved from the precursor. 2 disulfides stabilise this stretch: cysteine 44/cysteine 57 and cysteine 56/cysteine 69.

Belongs to the neurotoxin 10 (Hwtx-1) family. 51 (Hntx-8) subfamily. Hntx-8 sub-subfamily. In terms of tissue distribution, expressed by the venom gland.

The protein localises to the secreted. Its function is as follows. Ion channel inhibitor. This is U3-theraphotoxin-Hhn1k from Cyriopagopus hainanus (Chinese bird spider).